A 403-amino-acid chain; its full sequence is Probable eukaryotic initiation factor 4A (403 aa).

Residues 1 to 29 (MAQNDKIAPQDQDSFLDDQPGVRPIPSFD) form a disordered region. The Q motif motif lies at 26-54 (PSFDDMPLHQNLLRGIYSYGFEKPSSIQQ). The region spanning 57-230 (IAPFTRGGDI…KKFMRDPVRI (174 aa)) is the Helicase ATP-binding domain. 70 to 77 (AQSGTGKT) lines the ATP pocket. The short motif at 178–181 (DEAD) is the DEAD box element. Residues 241–401 (GIKQFFIAVE…ELPVDFAAYL (161 aa)) form the Helicase C-terminal domain.

This sequence belongs to the DEAD box helicase family. eIF4A subfamily. In terms of assembly, eIF4F is a multi-subunit complex, the composition of which varies with external and internal environmental conditions. It is composed of at least EIF4A, EIF4E and EIF4G.

The enzyme catalyses ATP + H2O = ADP + phosphate + H(+). ATP-dependent RNA helicase which is a subunit of the eIF4F complex involved in cap recognition and is required for mRNA binding to ribosome. In the current model of translation initiation, eIF4A unwinds RNA secondary structures in the 5'-UTR of mRNAs which is necessary to allow efficient binding of the small ribosomal subunit, and subsequent scanning for the initiator codon. In Leishmania infantum, this protein is Probable eukaryotic initiation factor 4A.